We begin with the raw amino-acid sequence, 227 residues long: Probable GTP-binding protein EngB (227 aa).

The 176-residue stretch at 41-216 (GRPEVAFAGR…RAEIARFAVP (176 aa)) folds into the EngB-type G domain. GTP-binding positions include 49–56 (GRSNVGKS), 76–80 (GRTKQ), 94–97 (DMPG), 161–164 (TKCD), and 195–197 (TSS). Residues serine 56 and threonine 78 each contribute to the Mg(2+) site.

It belongs to the TRAFAC class TrmE-Era-EngA-EngB-Septin-like GTPase superfamily. EngB GTPase family. It depends on Mg(2+) as a cofactor.

In terms of biological role, necessary for normal cell division and for the maintenance of normal septation. In Gluconobacter oxydans (strain 621H) (Gluconobacter suboxydans), this protein is Probable GTP-binding protein EngB.